The following is a 211-amino-acid chain: MPERPYSTTVFRDAARALAATGQRIYANGWSPATSSNYSQRLNTDFAAVTQSGKDKGLLRETDIMAVNMDGQPASSGKPSAETLLHTQLYRFDGNIQAVLHTHSHASTVLTMHWPANSITLEGYELLKALQGITSHNSRLTIPVFENTQDIAALAAKVDQQMRSGHISHAYLIRGHGLYTWANDLPTCYRQLEALETLLAIELECRRLRGS.

Positions 101 and 103 each coordinate Zn(2+).

It belongs to the aldolase class II family. MtnB subfamily. Requires Zn(2+) as cofactor.

The enzyme catalyses 5-(methylsulfanyl)-D-ribulose 1-phosphate = 5-methylsulfanyl-2,3-dioxopentyl phosphate + H2O. It participates in amino-acid biosynthesis; L-methionine biosynthesis via salvage pathway; L-methionine from S-methyl-5-thio-alpha-D-ribose 1-phosphate: step 2/6. Functionally, catalyzes the dehydration of methylthioribulose-1-phosphate (MTRu-1-P) into 2,3-diketo-5-methylthiopentyl-1-phosphate (DK-MTP-1-P). The sequence is that of Methylthioribulose-1-phosphate dehydratase from Alcanivorax borkumensis (strain ATCC 700651 / DSM 11573 / NCIMB 13689 / SK2).